The chain runs to 1059 residues: Carbamoyl phosphate synthase large chain (1059 aa).

Residues 1–401 (MPKRTDIKKI…SLLKACRSLE (401 aa)) are carboxyphosphate synthetic domain. ATP-binding residues include R129, R169, G175, G176, R208, I210, E215, G241, I242, H243, Q284, and E298. The region spanning 133–327 (KQLMEDLEQP…IAKLAAKIAV (195 aa)) is the ATP-grasp 1 domain. Mg(2+)-binding residues include Q284, E298, and N300. 3 residues coordinate Mn(2+): Q284, E298, and N300. The segment at 402-546 (IGVYHNEMPE…YSTYEWENES (145 aa)) is oligomerization domain. Residues 547 to 929 (IKSEKESVIV…ALYKAFEASY (383 aa)) are carbamoyl phosphate synthetic domain. Positions 671-861 (EQALKDLNIP…MAQIATKLIL (191 aa)) constitute an ATP-grasp 2 domain. Positions 707, 746, 748, 752, 777, 778, 779, 780, 820, and 832 each coordinate ATP. Mg(2+) is bound by residues Q820, E832, and N834. 3 residues coordinate Mn(2+): Q820, E832, and N834. The 130-residue stretch at 930–1059 (FHLPAFGNVI…ESRGFITQAI (130 aa)) folds into the MGS-like domain. The interval 930 to 1059 (FHLPAFGNVI…ESRGFITQAI (130 aa)) is allosteric domain.

The protein belongs to the CarB family. In terms of assembly, composed of two chains; the small (or glutamine) chain promotes the hydrolysis of glutamine to ammonia, which is used by the large (or ammonia) chain to synthesize carbamoyl phosphate. Tetramer of heterodimers (alpha,beta)4. Mg(2+) serves as cofactor. The cofactor is Mn(2+).

The enzyme catalyses hydrogencarbonate + L-glutamine + 2 ATP + H2O = carbamoyl phosphate + L-glutamate + 2 ADP + phosphate + 2 H(+). It carries out the reaction hydrogencarbonate + NH4(+) + 2 ATP = carbamoyl phosphate + 2 ADP + phosphate + 2 H(+). The protein operates within amino-acid biosynthesis; L-arginine biosynthesis; carbamoyl phosphate from bicarbonate: step 1/1. Its pathway is pyrimidine metabolism; UMP biosynthesis via de novo pathway; (S)-dihydroorotate from bicarbonate: step 1/3. Large subunit of the glutamine-dependent carbamoyl phosphate synthetase (CPSase). CPSase catalyzes the formation of carbamoyl phosphate from the ammonia moiety of glutamine, carbonate, and phosphate donated by ATP, constituting the first step of 2 biosynthetic pathways, one leading to arginine and/or urea and the other to pyrimidine nucleotides. The large subunit (synthetase) binds the substrates ammonia (free or transferred from glutamine from the small subunit), hydrogencarbonate and ATP and carries out an ATP-coupled ligase reaction, activating hydrogencarbonate by forming carboxy phosphate which reacts with ammonia to form carbamoyl phosphate. The sequence is that of Carbamoyl phosphate synthase large chain from Streptococcus mutans serotype c (strain ATCC 700610 / UA159).